The primary structure comprises 234 residues: Kappa-casein (234 aa).

Positions 1-21 (MMKSFLLVVNIVALTLPFLAA) are cleaved as a signal peptide. Repeat copies occupy residues 127–153 (LGKA…QPTV), 154–179 (SAGD…EEAR), and 180–207 (ESPE…PRES). The tract at residues 127-207 (LGKATILSTD…AVPSEEPRES (81 aa)) is 3 X 27 AA tandem repeats. The segment at 143–234 (QTPVSAAQPT…STGPAIASMA (92 aa)) is disordered. O-linked (GalNAc...) threonine glycosylation is present at Thr-144. The segment covering 144 to 171 (TPVSAAQPTVSAGDTPEVSSQFIDTPDT) has biased composition (polar residues). Thr-158 carries the phosphothreonine modification. Residue Ser-162 is modified to Phosphoserine; alternate. O-linked (GalNAc...) serine; alternate glycosylation is present at Ser-162.

It belongs to the kappa-casein family. In terms of tissue distribution, mammary gland specific. Secreted in milk.

Its subcellular location is the secreted. Functionally, kappa-casein stabilizes micelle formation, preventing casein precipitation in milk. The protein is Kappa-casein (CSN3) of Cavia porcellus (Guinea pig).